A 309-amino-acid polypeptide reads, in one-letter code: Homoserine kinase (309 aa).

Position 91–101 (91–101 (PIGSGLGSSAC)) interacts with ATP.

This sequence belongs to the GHMP kinase family. Homoserine kinase subfamily.

It is found in the cytoplasm. It carries out the reaction L-homoserine + ATP = O-phospho-L-homoserine + ADP + H(+). Its pathway is amino-acid biosynthesis; L-threonine biosynthesis; L-threonine from L-aspartate: step 4/5. Catalyzes the ATP-dependent phosphorylation of L-homoserine to L-homoserine phosphate. This is Homoserine kinase from Edwardsiella ictaluri (strain 93-146).